The chain runs to 295 residues: uncharacterized protein (295 aa).

Residues 151–290 (RTAVCARLSS…RAVAAAARAG (140 aa)) enclose the Resolvase/invertase-type recombinase catalytic domain. The active-site O-(5'-phospho-DNA)-serine intermediate is the serine 159.

This is an uncharacterized protein from Mycobacterium bovis (strain ATCC BAA-935 / AF2122/97).